Reading from the N-terminus, the 757-residue chain is Elongation factor G, mitochondrial (757 aa).

The tr-type G domain occupies 66-344; sequence DRMRNIGISA…VLDYLPCPME (279 aa). GTP-binding positions include 75–82, 142–146, and 196–199; these read AHIDSGKT, DTPGH, and NKLD.

The protein belongs to the TRAFAC class translation factor GTPase superfamily. Classic translation factor GTPase family. EF-G/EF-2 subfamily.

It localises to the mitochondrion. The protein operates within protein biosynthesis; polypeptide chain elongation. In terms of biological role, mitochondrial GTPase that catalyzes the GTP-dependent ribosomal translocation step during translation elongation. During this step, the ribosome changes from the pre-translocational (PRE) to the post-translocational (POST) state as the newly formed A-site-bound peptidyl-tRNA and P-site-bound deacylated tRNA move to the P and E sites, respectively. Catalyzes the coordinated movement of the two tRNA molecules, the mRNA and conformational changes in the ribosome. The sequence is that of Elongation factor G, mitochondrial from Oryza sativa subsp. japonica (Rice).